We begin with the raw amino-acid sequence, 1383 residues long: Spike glycoprotein (1383 aa).

The N-terminal stretch at 1–25 (MRSLIYFWLLLPVLPTLSLPQDVTR) is a signal peptide. The segment at 26 to 734 (CQSTTNFRRF…TRELPGFFYH (709 aa)) is S1. Topologically, residues 26–1324 (CQSTTNFRRF…NRVETYIKWP (1299 aa)) are virion surface. An interaction with host ANPEP region spans residues 617 to 745 (FQFTKGELIT…NDGSNCTEPV (129 aa)). The S2 stretch occupies residues 735–1383 (SNDGSNCTEP…YEAFEKVHVQ (649 aa)). The segment at 955–975 (IGGMALGGITAAAALPFSYAV) is fusion peptide. The tract at residues 969-1088 (LPFSYAVQAR…QVDRLITGRL (120 aa)) is heptad repeat 1 (HR1). Coiled coils occupy residues 1036-1080 (QEVV…DVQV) and 1272-1314 (TYLN…LEWL). Positions 1240–1336 (PDYIDVNKTL…VWLIIVIVLI (97 aa)) are heptad repeat 2 (HR2). The helical transmembrane segment at 1325-1344 (WWVWLIIVIVLIFVVSLLVF) threads the bilayer. At 1345–1383 (CCISTGCCGCCGCCGACFSGCCRGPRLQPYEAFEKVHVQ) the chain is on the intravirion side. A KxHxx motif is present at residues 1379–1383 (KVHVQ).

It belongs to the alphacoronaviruses spike protein family. Homotrimer. During virus morphogenesis, found in a complex with M and HE proteins. Interacts with host ANPEP.

The protein localises to the virion membrane. Its subcellular location is the host endoplasmic reticulum-Golgi intermediate compartment membrane. In terms of biological role, S1 region attaches the virion to the cell membrane by interacting with host ANPEP/aminopeptidase N, initiating the infection. Binding to the receptor probably induces conformational changes in the S glycoprotein unmasking the fusion peptide of S2 region and activating membranes fusion. S2 region belongs to the class I viral fusion protein. Under the current model, the protein has at least 3 conformational states: pre-fusion native state, pre-hairpin intermediate state, and post-fusion hairpin state. During viral and target cell membrane fusion, the coiled coil regions (heptad repeats) regions assume a trimer-of-hairpins structure, positioning the fusion peptide in close proximity to the C-terminal region of the ectodomain. The formation of this structure appears to drive apposition and subsequent fusion of viral and target cell membranes. This is Spike glycoprotein from Porcine epidemic diarrhea virus (strain CV777) (PEDV).